A 152-amino-acid chain; its full sequence is Small ribosomal subunit protein uS15 (152 aa).

The protein belongs to the universal ribosomal protein uS15 family. In terms of assembly, part of the 30S ribosomal subunit.

This Methanocorpusculum labreanum (strain ATCC 43576 / DSM 4855 / Z) protein is Small ribosomal subunit protein uS15.